The following is a 173-amino-acid chain: RNA polymerase sigma factor TcsR (173 aa).

The tract at residues 122 to 169 is sigma-70 factor domain-4; sequence IKDLTQNEKNIIRKIYLDRLRESEISRELNISRQAVNKTHLRALEKLK. Residues 143 to 162 constitute a DNA-binding region (H-T-H motif); the sequence is ESEISRELNISRQAVNKTHL.

Belongs to the sigma-70 factor family.

Sigma factors are initiation factors that promote the attachment of RNA polymerase to specific initiation sites and are then released. Transcriptional regulator specifically required to activate expression of the toxin gene locus, composed of tcsL, tcsH and tcdE/utxA. The chain is RNA polymerase sigma factor TcsR from Paraclostridium sordellii (Clostridium sordellii).